Consider the following 159-residue polypeptide: Ribosomal RNA large subunit methyltransferase H (159 aa).

S-adenosyl-L-methionine is bound by residues Gly-108 and Phe-127–Phe-132.

The protein belongs to the RNA methyltransferase RlmH family. In terms of assembly, homodimer.

It is found in the cytoplasm. The catalysed reaction is pseudouridine(1915) in 23S rRNA + S-adenosyl-L-methionine = N(3)-methylpseudouridine(1915) in 23S rRNA + S-adenosyl-L-homocysteine + H(+). In terms of biological role, specifically methylates the pseudouridine at position 1915 (m3Psi1915) in 23S rRNA. This chain is Ribosomal RNA large subunit methyltransferase H, found in Clostridium perfringens (strain ATCC 13124 / DSM 756 / JCM 1290 / NCIMB 6125 / NCTC 8237 / Type A).